A 107-amino-acid chain; its full sequence is UPF0145 protein YbjQ (107 aa).

It belongs to the UPF0145 family.

This is UPF0145 protein YbjQ from Salmonella dublin (strain CT_02021853).